Here is a 379-residue protein sequence, read N- to C-terminus: Beta sliding clamp (379 aa).

It belongs to the beta sliding clamp family. Forms a ring-shaped head-to-tail homodimer around DNA which binds and tethers DNA polymerases and other proteins to the DNA. The DNA replisome complex has a single clamp-loading complex (3 tau and 1 each of delta, delta', psi and chi subunits) which binds 3 Pol III cores (1 core on the leading strand and 2 on the lagging strand) each with a beta sliding clamp dimer. Additional proteins in the replisome are other copies of gamma, psi and chi, Ssb, DNA helicase and RNA primase.

The protein resides in the cytoplasm. In terms of biological role, confers DNA tethering and processivity to DNA polymerases and other proteins. Acts as a clamp, forming a ring around DNA (a reaction catalyzed by the clamp-loading complex) which diffuses in an ATP-independent manner freely and bidirectionally along dsDNA. Initially characterized for its ability to contact the catalytic subunit of DNA polymerase III (Pol III), a complex, multichain enzyme responsible for most of the replicative synthesis in bacteria; Pol III exhibits 3'-5' exonuclease proofreading activity. The beta chain is required for initiation of replication as well as for processivity of DNA replication. This Rickettsia bellii (strain RML369-C) protein is Beta sliding clamp (dnaN).